Reading from the N-terminus, the 596-residue chain is mRNA export factor mex67 (596 aa).

S128, S130, and S133 each carry phosphoserine. 3 LRR repeats span residues 215–236 (DVIS…TTLA), 241–262 (KLLN…DPWS), and 263–282 (PKTK…PIVT). Residues 283 to 338 (TFANRAMDYQREMVSRFPKLRLLDGNSINSEIIASQSTVPFPVYQSFFDKVETEQI) enclose the LRRCT domain. Residues 338-499 (IVNSFLAAFF…ILIINDLLVI (162 aa)) enclose the NTF2 domain. Positions 543–596 (DTRQQIVLKIKAETGLNDYYAHMCCEQNNWDYNSALASFLELKSRNVIPAEAFS) constitute a TAP-C domain.

The protein belongs to the NXF family. Interacts with mlo3 and rae1.

It is found in the nucleus. The protein resides in the cytoplasm. In terms of biological role, involved in the export of mRNA from the nucleus to the cytoplasm. The sequence is that of mRNA export factor mex67 (mex67) from Schizosaccharomyces pombe (strain 972 / ATCC 24843) (Fission yeast).